The primary structure comprises 229 residues: Glycerol-3-phosphate acyltransferase (229 aa).

Transmembrane regions (helical) follow at residues 2–22 (WSLTVILLISYFLGSIPGALW), 56–76 (LATVVDFGKGFLAAGVVASVI), 93–113 (FVVLGLLAGVGAVIGHMYPIF), 129–149 (LFALTPLTMAITLAVFVAVLL), 151–171 (SRYVSLSSITAAVAFPTIVAL), and 178–198 (ADLDPSLLVFGGLLALSIVVA).

This sequence belongs to the PlsY family. Probably interacts with PlsX.

The protein localises to the cell inner membrane. It carries out the reaction an acyl phosphate + sn-glycerol 3-phosphate = a 1-acyl-sn-glycero-3-phosphate + phosphate. It participates in lipid metabolism; phospholipid metabolism. Its function is as follows. Catalyzes the transfer of an acyl group from acyl-phosphate (acyl-PO(4)) to glycerol-3-phosphate (G3P) to form lysophosphatidic acid (LPA). This enzyme utilizes acyl-phosphate as fatty acyl donor, but not acyl-CoA or acyl-ACP. This Salinibacter ruber (strain DSM 13855 / M31) protein is Glycerol-3-phosphate acyltransferase.